A 131-amino-acid polypeptide reads, in one-letter code: Glycine cleavage system H protein (131 aa).

The region spanning Arg24–Glu106 is the Lipoyl-binding domain. The residue at position 65 (Lys65) is an N6-lipoyllysine.

This sequence belongs to the GcvH family. The glycine cleavage system is composed of four proteins: P, T, L and H. Requires (R)-lipoate as cofactor.

The glycine cleavage system catalyzes the degradation of glycine. The H protein shuttles the methylamine group of glycine from the P protein to the T protein. The polypeptide is Glycine cleavage system H protein (Xanthomonas oryzae pv. oryzae (strain MAFF 311018)).